The following is a 303-amino-acid chain: CDAN1-interacting nuclease 1 (303 aa).

It localises to the nucleus. The protein resides in the cytoplasm. May play a role in erythroid cell differentiation. The chain is CDAN1-interacting nuclease 1 from Xenopus laevis (African clawed frog).